The following is a 144-amino-acid chain: Large ribosomal subunit protein uL16 (144 aa).

Residues 1–19 are compositionally biased toward basic residues; the sequence is MLLPKRVKYRRQHRPKTTG. The disordered stretch occupies residues 1–23; sequence MLLPKRVKYRRQHRPKTTGRSKG.

The protein belongs to the universal ribosomal protein uL16 family. Part of the 50S ribosomal subunit.

Functionally, binds 23S rRNA and is also seen to make contacts with the A and possibly P site tRNAs. The polypeptide is Large ribosomal subunit protein uL16 (Staphylococcus epidermidis (strain ATCC 35984 / DSM 28319 / BCRC 17069 / CCUG 31568 / BM 3577 / RP62A)).